Reading from the N-terminus, the 68-residue chain is DNA-directed RNA polymerase subunit omega (68 aa).

The protein belongs to the RNA polymerase subunit omega family. As to quaternary structure, the RNAP catalytic core consists of 2 alpha, 1 beta, 1 beta' and 1 omega subunit. When a sigma factor is associated with the core the holoenzyme is formed, which can initiate transcription.

It carries out the reaction RNA(n) + a ribonucleoside 5'-triphosphate = RNA(n+1) + diphosphate. Promotes RNA polymerase assembly. Latches the N- and C-terminal regions of the beta' subunit thereby facilitating its interaction with the beta and alpha subunits. The sequence is that of DNA-directed RNA polymerase subunit omega from Chromobacterium violaceum (strain ATCC 12472 / DSM 30191 / JCM 1249 / CCUG 213 / NBRC 12614 / NCIMB 9131 / NCTC 9757 / MK).